Reading from the N-terminus, the 310-residue chain is Upstream stimulatory factor 1 (310 aa).

Over residues 1-17 (MKGQQKTAETEEGTVQI) the composition is skewed to polar residues. Disordered regions lie at residues 1–26 (MKGQ…ATGE) and 171–209 (QGGS…EVER). Over residues 190 to 209 (EAPRTTRDEKRRAQHNEVER) the composition is skewed to basic and acidic residues. In terms of domain architecture, bHLH spans 199–254 (KRRAQHNEVERRRRDKINNWIVQLSKIIPDCSMESTKSGQSKGGILSKACDYIQEL). A leucine-zipper region spans residues 271 to 292 (LQLDNDVLRQQVEDLKNKNLLL). Residue K306 forms a Glycyl lysine isopeptide (Lys-Gly) (interchain with G-Cter in SUMO2) linkage.

In terms of assembly, efficient DNA binding requires dimerization with another bHLH protein. Binds DNA as a homodimer or a heterodimer (USF1/USF2). Interacts with varicella-zoster virus IE62 protein.

The protein resides in the nucleus. Its function is as follows. Transcription factor that binds to a symmetrical DNA sequence (E-boxes) (5'-CACGTG-3') that is found in a variety of viral and cellular promoters. The polypeptide is Upstream stimulatory factor 1 (USF1) (Homo sapiens (Human)).